The chain runs to 129 residues: uncharacterized protein (129 aa).

2 C2H2-type zinc fingers span residues 75-99 (FVCP…YTEH) and 101-124 (KVCP…CKKH).

Functionally, essential for virus function. This is an uncharacterized protein from Saccharolobus solfataricus (Sulfolobus solfataricus).